Here is a 767-residue protein sequence, read N- to C-terminus: Phosphoribosylformylglycinamidine synthase subunit PurL (767 aa).

Histidine 65 is an active-site residue. ATP is bound by residues tyrosine 68 and lysine 112. Glutamate 114 serves as a coordination point for Mg(2+). Substrate is bound by residues serine 115 to histidine 118 and arginine 137. Histidine 116 serves as the catalytic Proton acceptor. Aspartate 138 contacts Mg(2+). Glutamine 262 is a binding site for substrate. Aspartate 290 contacts Mg(2+). Glutamate 334 to glutamine 336 lines the substrate pocket. Positions 522 and 559 each coordinate ATP. Asparagine 560 serves as a coordination point for Mg(2+). Serine 562 is a binding site for substrate.

It belongs to the FGAMS family. Monomer. Part of the FGAM synthase complex composed of 1 PurL, 1 PurQ and 2 PurS subunits.

It localises to the cytoplasm. It carries out the reaction N(2)-formyl-N(1)-(5-phospho-beta-D-ribosyl)glycinamide + L-glutamine + ATP + H2O = 2-formamido-N(1)-(5-O-phospho-beta-D-ribosyl)acetamidine + L-glutamate + ADP + phosphate + H(+). The protein operates within purine metabolism; IMP biosynthesis via de novo pathway; 5-amino-1-(5-phospho-D-ribosyl)imidazole from N(2)-formyl-N(1)-(5-phospho-D-ribosyl)glycinamide: step 1/2. Its function is as follows. Part of the phosphoribosylformylglycinamidine synthase complex involved in the purines biosynthetic pathway. Catalyzes the ATP-dependent conversion of formylglycinamide ribonucleotide (FGAR) and glutamine to yield formylglycinamidine ribonucleotide (FGAM) and glutamate. The FGAM synthase complex is composed of three subunits. PurQ produces an ammonia molecule by converting glutamine to glutamate. PurL transfers the ammonia molecule to FGAR to form FGAM in an ATP-dependent manner. PurS interacts with PurQ and PurL and is thought to assist in the transfer of the ammonia molecule from PurQ to PurL. The polypeptide is Phosphoribosylformylglycinamidine synthase subunit PurL (Renibacterium salmoninarum (strain ATCC 33209 / DSM 20767 / JCM 11484 / NBRC 15589 / NCIMB 2235)).